Here is a 216-residue protein sequence, read N- to C-terminus: Redox-sensing transcriptional repressor Rex (216 aa).

A DNA-binding region (H-T-H motif) is located at residues 15–54; that stretch reads KYLRVTQQLIEEGRDAVSSKELGDFTGINPVQVRRDLNAI. Residue 89–94 participates in NAD(+) binding; that stretch reads GAGNLG.

It belongs to the transcriptional regulatory Rex family. As to quaternary structure, homodimer.

It is found in the cytoplasm. In terms of biological role, modulates transcription in response to changes in cellular NADH/NAD(+) redox state. The polypeptide is Redox-sensing transcriptional repressor Rex (Rubrobacter xylanophilus (strain DSM 9941 / JCM 11954 / NBRC 16129 / PRD-1)).